Reading from the N-terminus, the 291-residue chain is Proteasomal ubiquitin receptor ADRM1 homolog rpn1301 (291 aa).

The region spanning 1-114 (MSLITFKAGK…ERINSYIKDQ (114 aa)) is the Pru domain. The interval 135–162 (TVEQSEPIAQPTESSKESSEIGAPNSDE) is disordered. A DEUBAD domain is found at 178-290 (AQAGFGGSTV…ARFVSRNNGS (113 aa)).

The protein belongs to the ADRM1 family. Component of the 19S proteasome regulatory particle complex. The 2 S.pombe rpn13 homologs, rpn1301 and rpn1302 are present at a 0.2-1 ratio.

Its subcellular location is the cytoplasm. The protein resides in the nucleus. In terms of biological role, component of the 26S proteasome, a multiprotein complex involved in the ATP-dependent degradation of ubiquitinated proteins. This complex plays a key role in the maintenance of protein homeostasis by removing misfolded or damaged proteins, which could impair cellular functions, and by removing proteins whose functions are no longer required. Therefore, the proteasome participates in numerous cellular processes, including cell cycle progression, apoptosis, or DNA damage repair. Within the complex, functions as a proteasomal ubiquitin receptor. The chain is Proteasomal ubiquitin receptor ADRM1 homolog rpn1301 (rpn1301) from Schizosaccharomyces pombe (strain 972 / ATCC 24843) (Fission yeast).